The following is a 287-amino-acid chain: Hypersensitive-induced response protein-like protein 2 (287 aa).

The N-myristoyl glycine moiety is linked to residue G2.

Positive regulator of hypersensitive response (HR)-like cell death. May be involved in potassium ion channel regulation. The chain is Hypersensitive-induced response protein-like protein 2 (HIRL2) from Oryza sativa subsp. japonica (Rice).